A 130-amino-acid polypeptide reads, in one-letter code: Con-Ins M1 (130 aa).

Positions 1–21 (MTTSSYFLLVALGLLLYVCQS) are cleaved as a signal peptide. 4 disulfides stabilise this stretch: C29–C107, C41–C110, C53–C123, and C109–C114. Residue P34 is modified to 4-hydroxyproline; partial. Positions 59–92 (AHGGTNDARATTGRALSLSKRRGFLSMLKRRGKR) are cleaved as a propeptide — c peptide. E118 carries the post-translational modification 4-carboxyglutamate; partial. S129 is subject to Serine amide.

Belongs to the insulin family. In terms of assembly, heterodimer of A and B chains; disulfide-linked. Expressed by the venom gland.

It localises to the secreted. This venom insulin facilitates prey capture by rapidly inducing hypoglycemic shock. Intraperitoneal injection of this peptide into zebrafish lowers blood glucose with the same potency than human insulin. In vivo, when applied to water, this peptide reduces overall locomotor activity of zebrafish larvae, observed as a significant decrease in the percentage of time spent swimming and movement frequency. The polypeptide is Con-Ins M1 (Conus marmoreus (Marble cone)).